Reading from the N-terminus, the 354-residue chain is DNA integrity scanning protein DisA (354 aa).

Positions 6-144 constitute a DAC domain; it reads GMKIKDTLKI…GDIKYVLRDS (139 aa). ATP-binding positions include glycine 73, leucine 91, and 104–108; that span reads TRHRT.

Belongs to the DisA family. Homooctamer. It depends on Mg(2+) as a cofactor.

It catalyses the reaction 2 ATP = 3',3'-c-di-AMP + 2 diphosphate. Its function is as follows. Participates in a DNA-damage check-point that is active prior to asymmetric division when DNA is damaged. DisA forms globular foci that rapidly scan along the chromosomes during sporulation, searching for lesions. When a lesion is present, DisA pauses at the lesion site. This triggers a cellular response that culminates in a temporary block in sporulation initiation. Functionally, also has diadenylate cyclase activity, catalyzing the condensation of 2 ATP molecules into cyclic di-AMP (c-di-AMP). c-di-AMP acts as a signaling molecule that couples DNA integrity with progression of sporulation. The rise in c-di-AMP level generated by DisA while scanning the chromosome, operates as a positive signal that advances sporulation; upon encountering a lesion, the DisA focus arrests at the damaged site and halts c-di-AMP synthesis. The protein is DNA integrity scanning protein DisA of Clostridium botulinum (strain Alaska E43 / Type E3).